The sequence spans 604 residues: Asparagine synthetase [glutamine-hydrolyzing] 1 (604 aa).

Cys2 acts as the Nucleophile in catalysis. In terms of domain architecture, Glutamine amidotransferase type-2 spans Cys2–Gly186. L-glutamine contacts are provided by residues Arg50–Val54, Asn75–Glu77, and Asp99. One can recognise an Asparagine synthetase domain in the interval Leu211–Lys451. ATP is bound by residues Leu232, Val268, and Ser342–Gly343.

It catalyses the reaction L-aspartate + L-glutamine + ATP + H2O = L-asparagine + L-glutamate + AMP + diphosphate + H(+). It functions in the pathway amino-acid biosynthesis; L-asparagine biosynthesis. Functionally, essential for nitrogen assimilation, distribution and remobilization within the plant via the phloem. The chain is Asparagine synthetase [glutamine-hydrolyzing] 1 from Oryza sativa subsp. japonica (Rice).